A 488-amino-acid chain; its full sequence is Glutamyl-tRNA(Gln) amidotransferase subunit A (488 aa).

Residues lysine 77 and serine 152 each act as charge relay system in the active site. The Acyl-ester intermediate role is filled by serine 176.

Belongs to the amidase family. GatA subfamily. As to quaternary structure, heterotrimer of A, B and C subunits.

It carries out the reaction L-glutamyl-tRNA(Gln) + L-glutamine + ATP + H2O = L-glutaminyl-tRNA(Gln) + L-glutamate + ADP + phosphate + H(+). Its function is as follows. Allows the formation of correctly charged Gln-tRNA(Gln) through the transamidation of misacylated Glu-tRNA(Gln) in organisms which lack glutaminyl-tRNA synthetase. The reaction takes place in the presence of glutamine and ATP through an activated gamma-phospho-Glu-tRNA(Gln). The protein is Glutamyl-tRNA(Gln) amidotransferase subunit A of Streptococcus pneumoniae (strain 70585).